The following is a 428-amino-acid chain: Putative aspergillopepsin A-like aspartic endopeptidase AFUA_2G15950 (428 aa).

Residues 1–19 form the signal peptide; that stretch reads MHSLQSFLFLLLLGYGVFA. Residues 20–90 constitute a propeptide, activation peptide; it reads APTSPQAQSQ…GTAANLVTDV (71 aa). Residues 110-425 form the Peptidase A1 domain; the sequence is FVSPVTIGGQ…DLRGPSIGLA (316 aa). Asp-126 is a catalytic residue. Asn-276 carries an N-linked (GlcNAc...) asparagine glycan. Asp-312 is an active-site residue. Asn-380 carries N-linked (GlcNAc...) asparagine glycosylation.

It belongs to the peptidase A1 family.

The protein localises to the secreted. The protein is Putative aspergillopepsin A-like aspartic endopeptidase AFUA_2G15950 of Aspergillus fumigatus (strain ATCC MYA-4609 / CBS 101355 / FGSC A1100 / Af293) (Neosartorya fumigata).